The sequence spans 84 residues: Sec-independent protein translocase protein TatA (84 aa).

Residues 1–21 traverse the membrane as a helical segment; that stretch reads MGGISIWQLLIVAVIVVLLFG. Basic and acidic residues-rich tracts occupy residues 42–55 and 64–84; these read AMSD…KTSQ and IADK…KEQV. The interval 42–84 is disordered; it reads AMSDDDAKQDKTSQDADFTAKSIADKQGEAKKEDAKSQDKEQV.

This sequence belongs to the TatA/E family. The Tat system comprises two distinct complexes: a TatABC complex, containing multiple copies of TatA, TatB and TatC subunits, and a separate TatA complex, containing only TatA subunits. Substrates initially bind to the TatABC complex, which probably triggers association of the separate TatA complex to form the active translocon.

Its subcellular location is the cell inner membrane. In terms of biological role, part of the twin-arginine translocation (Tat) system that transports large folded proteins containing a characteristic twin-arginine motif in their signal peptide across membranes. TatA could form the protein-conducting channel of the Tat system. The sequence is that of Sec-independent protein translocase protein TatA from Salmonella typhi.